We begin with the raw amino-acid sequence, 105 residues long: Acylphosphatase (105 aa).

In terms of domain architecture, Acylphosphatase-like spans 16-105 (RLTAWVRGRV…RGGYSGFTQA (90 aa)). Catalysis depends on residues R31 and N49.

Belongs to the acylphosphatase family.

It catalyses the reaction an acyl phosphate + H2O = a carboxylate + phosphate + H(+). The sequence is that of Acylphosphatase (acyP) from Acidothermus cellulolyticus (strain ATCC 43068 / DSM 8971 / 11B).